The sequence spans 324 residues: tRNA N6-adenosine threonylcarbamoyltransferase (324 aa).

Fe cation-binding residues include histidine 107, histidine 111, and tyrosine 127. Substrate is bound by residues 127-131 (YVSGG), aspartate 159, glycine 172, glutamate 176, and asparagine 257. Residue aspartate 285 coordinates Fe cation.

This sequence belongs to the KAE1 / TsaD family. Monomer. Component of the KEOPS complex that consists of Kae1, Bud32, Cgi121 and Pcc1; the whole complex dimerizes. Requires Fe(2+) as cofactor.

It is found in the cytoplasm. It carries out the reaction L-threonylcarbamoyladenylate + adenosine(37) in tRNA = N(6)-L-threonylcarbamoyladenosine(37) in tRNA + AMP + H(+). Required for the formation of a threonylcarbamoyl group on adenosine at position 37 (t(6)A37) in tRNAs that read codons beginning with adenine. Is a component of the KEOPS complex that is probably involved in the transfer of the threonylcarbamoyl moiety of threonylcarbamoyl-AMP (TC-AMP) to the N6 group of A37. Kae1 likely plays a direct catalytic role in this reaction, but requires other protein(s) of the complex to fulfill this activity. In Pyrococcus horikoshii (strain ATCC 700860 / DSM 12428 / JCM 9974 / NBRC 100139 / OT-3), this protein is tRNA N6-adenosine threonylcarbamoyltransferase.